A 549-amino-acid polypeptide reads, in one-letter code: Glucose-6-phosphate isomerase (549 aa).

Glu355 acts as the Proton donor in catalysis. Active-site residues include His386 and Lys514.

Belongs to the GPI family.

It is found in the cytoplasm. The catalysed reaction is alpha-D-glucose 6-phosphate = beta-D-fructose 6-phosphate. It functions in the pathway carbohydrate biosynthesis; gluconeogenesis. The protein operates within carbohydrate degradation; glycolysis; D-glyceraldehyde 3-phosphate and glycerone phosphate from D-glucose: step 2/4. Its function is as follows. Catalyzes the reversible isomerization of glucose-6-phosphate to fructose-6-phosphate. This is Glucose-6-phosphate isomerase from Salmonella typhi.